Reading from the N-terminus, the 423-residue chain is Glycine amidinotransferase, mitochondrial (423 aa).

Residues 1-43 (MLRVRCLRGGSRGAEALHYIGSRLGRTVTGWVQRTFQSTQAAT) constitute a mitochondrion transit peptide. A phosphoserine mark is found at serine 46 and serine 49. Aspartate 170 provides a ligand contact to arginine. Active-site residues include aspartate 254 and histidine 303. Arginine-binding residues include aspartate 305, arginine 322, serine 354, and serine 355. Lysine 385 is modified (N6-acetyllysine). Catalysis depends on cysteine 407, which acts as the Amidino-cysteine intermediate.

The protein belongs to the amidinotransferase family. Homodimer. Kidney. Expressed biallelically in placenta.

The protein localises to the mitochondrion inner membrane. It catalyses the reaction L-arginine + glycine = guanidinoacetate + L-ornithine. The enzyme catalyses 4-aminobutanoate + L-arginine = 4-guanidinobutanoate + L-ornithine. It carries out the reaction beta-alanine + L-arginine = 3-guanidinopropanoate + L-ornithine. The catalysed reaction is taurine + L-arginine = taurocyamine + L-ornithine. It functions in the pathway amine and polyamine biosynthesis; creatine biosynthesis; creatine from L-arginine and glycine: step 1/2. Functionally, transamidinase that catalyzes the transfer of the amidino group of L-arginine onto the amino moiety of acceptor metabolites such as glycine, beta-alanine, gamma-aminobutyric acid (GABA) and taurine yielding the corresponding guanidine derivatives. Catalyzes the rate-limiting step of creatine biosynthesis, namely the transfer of the amidino group from L-arginine to glycine to generate guanidinoacetate, which is then methylated by GAMT to form creatine. Provides creatine as a source for ATP generation in tissues with high energy demands, in particular skeletal muscle, heart and brain. In Sus scrofa (Pig), this protein is Glycine amidinotransferase, mitochondrial (GATM).